The sequence spans 235 residues: Eukaryotic translation initiation factor 4E-1 (235 aa).

A disordered region spans residues 1 to 52; the sequence is MVVEDSMKATSAEDLSNSIANQNPRGRGGDEDEELEEGEIVGDDDLDSSNLS. Residues 13-24 show a composition bias toward polar residues; the sequence is EDLSNSIANQNP. A compositionally biased stretch (acidic residues) spans 30–47; sequence DEDEELEEGEIVGDDDLD. 2 EIF4G-binding regions span residues 60–63 and 70–106; these read HPLE and FDNPSAKSKQATWGASIRPIYTFSTVEEFWSVYNNIH. MRNA-binding positions include 78 to 83, Lys110, and 128 to 129; these read KQATWG and WE. Cys133 and Cys171 are joined by a disulfide. Residues 154 to 163 form an EIF4G-binding region; it reads YTLLAMIGEQ. Residues 178-183 and 223-227 each bind mRNA; these read RSGQDK and KKFDR.

The protein belongs to the eukaryotic initiation factor 4E family. EIF4F is a multi-subunit complex, the composition of which varies with external and internal environmental conditions. It is composed of at least EIF4A, EIF4E and EIF4G. EIF4E is also known to interact with other partners. Interacts directly with eIF4G. In higher plants two isoforms of EIF4F have been identified, named isoform EIF4F and isoform EIF(iso)4F. Isoform EIF4F has subunits p220 and p26, whereas isoform EIF(iso)4F has subunits p82 and p28. As to quaternary structure, (Microbial infection) Interacts with potyvirus viral genome-linked protein (VPg); this interaction is possible in susceptible hosts but impaired in resistant plants. In terms of processing, according to the redox status, the Cys-133-Cys-171 disulfide bridge may have a role in regulating protein function by affecting its ability to bind capped mRNA.

It localises to the nucleus. The protein localises to the cytoplasm. Component of the protein complex eIF4F, which is involved in the recognition of the mRNA cap, ATP-dependent unwinding of 5'-terminal secondary structure and recruitment of mRNA to the ribosome. Recognizes and binds the 7-methylguanosine-containing mRNA cap during an early step in the initiation of protein synthesis and facilitates ribosome binding by inducing the unwinding of the mRNAs secondary structures. Key component of recessive resistance to potyviruses and Tombusviridae genus Carmovirus such as melon necrotic spot virus (MNSV). Its function is as follows. (Microbial infection) Susceptibility host factor required for viral infection by recruiting viral RNAs, including uncapped and non-polyadenylated RNA, to the host ribosomal complex via an interaction with viral genome-linked protein (VPg). The protein is Eukaryotic translation initiation factor 4E-1 of Cucumis melo (Muskmelon).